The primary structure comprises 268 residues: Tryptophan synthase alpha chain (268 aa).

Residues Glu49 and Asp60 each act as proton acceptor in the active site.

Belongs to the TrpA family. As to quaternary structure, tetramer of two alpha and two beta chains.

It carries out the reaction (1S,2R)-1-C-(indol-3-yl)glycerol 3-phosphate + L-serine = D-glyceraldehyde 3-phosphate + L-tryptophan + H2O. It functions in the pathway amino-acid biosynthesis; L-tryptophan biosynthesis; L-tryptophan from chorismate: step 5/5. The alpha subunit is responsible for the aldol cleavage of indoleglycerol phosphate to indole and glyceraldehyde 3-phosphate. The sequence is that of Tryptophan synthase alpha chain from Pseudomonas aeruginosa (strain UCBPP-PA14).